A 405-amino-acid polypeptide reads, in one-letter code: uncharacterized protein (405 aa).

12 helical membrane passes run 19–39 (IVSI…PLAV), 47–67 (VMGF…FATL), 85–105 (IVVF…TAGL), 107–127 (ASLP…LGIG), 156–176 (GIVT…FYHW), 178–198 (GLQA…LLAI), 224–244 (GMAL…ITLF), 252–272 (GAAF…LLFP), 283–303 (VAMI…VATM), 309–329 (IGVL…GVVA), 344–364 (TYTV…GLVM), and 366–386 (WAGV…ALLL).

The protein belongs to the major facilitator superfamily. YhhS family.

It localises to the cell inner membrane. This is an uncharacterized protein from Shigella flexneri.